The chain runs to 151 residues: Prefoldin subunit alpha (151 aa).

The interval 120–151 (TVEEETASLEEKAQQAQQQQMQQLQQMQQEDE) is disordered. Over residues 133–151 (QQAQQQQMQQLQQMQQEDE) the composition is skewed to low complexity.

The protein belongs to the prefoldin subunit alpha family. As to quaternary structure, heterohexamer of two alpha and four beta subunits.

It is found in the cytoplasm. Functionally, molecular chaperone capable of stabilizing a range of proteins. Seems to fulfill an ATP-independent, HSP70-like function in archaeal de novo protein folding. The chain is Prefoldin subunit alpha from Natronomonas pharaonis (strain ATCC 35678 / DSM 2160 / CIP 103997 / JCM 8858 / NBRC 14720 / NCIMB 2260 / Gabara) (Halobacterium pharaonis).